The chain runs to 325 residues: RepFIB replication protein A (325 aa).

Residues 279-298 (APNDESKENPLPPSPAEKVS) are disordered.

This sequence belongs to the initiator RepB protein family.

Functionally, this protein is essential for plasmid replication; it is involved in copy control functions. In vitro, binds to the DNA repeat units, BCDD'D'', EFG and HIJ. This is RepFIB replication protein A (repA) from Escherichia coli.